Here is a 424-residue protein sequence, read N- to C-terminus: Histidine--tRNA ligase (424 aa).

Belongs to the class-II aminoacyl-tRNA synthetase family. As to quaternary structure, homodimer.

It is found in the cytoplasm. The catalysed reaction is tRNA(His) + L-histidine + ATP = L-histidyl-tRNA(His) + AMP + diphosphate + H(+). This Salmonella paratyphi B (strain ATCC BAA-1250 / SPB7) protein is Histidine--tRNA ligase.